A 363-amino-acid chain; its full sequence is Protein Wnt-5 (363 aa).

The signal sequence occupies residues 1–27; that stretch reads MVGMTRIQSAEPVWILFVLTLYSSVLM. N-linked (GlcNAc...) asparagine glycosylation is found at Asn-48 and Asn-98. 11 disulfides stabilise this stretch: Cys-88/Cys-99, Cys-137/Cys-145, Cys-147/Cys-165, Cys-221/Cys-235, Cys-223/Cys-230, Cys-292/Cys-323, Cys-308/Cys-318, Cys-322/Cys-362, Cys-338/Cys-353, Cys-340/Cys-350, and Cys-345/Cys-346. Residue Ser-227 is the site of O-palmitoleoyl serine; by PORCN attachment.

It belongs to the Wnt family. Post-translationally, palmitoleoylation is required for efficient binding to frizzled receptors. Depalmitoleoylation leads to Wnt signaling pathway inhibition.

It is found in the secreted. The protein localises to the extracellular space. It localises to the extracellular matrix. Ligand for members of the frizzled family of seven transmembrane receptors. Probable developmental protein. May be a signaling molecule which affects the development of discrete regions of tissues. Is likely to signal over only few cell diameters. The protein is Protein Wnt-5 (WNT5) of Halocynthia roretzi (Sea squirt).